The primary structure comprises 431 residues: Enolase (431 aa).

Gln-168 contacts (2R)-2-phosphoglycerate. Glu-210 (proton donor) is an active-site residue. Residues Asp-247, Glu-291, and Asp-318 each coordinate Mg(2+). The (2R)-2-phosphoglycerate site is built by Lys-343, Arg-372, Ser-373, and Lys-394. Lys-343 functions as the Proton acceptor in the catalytic mechanism.

It belongs to the enolase family. Component of the RNA degradosome, a multiprotein complex involved in RNA processing and mRNA degradation. Mg(2+) is required as a cofactor.

The protein resides in the cytoplasm. It is found in the secreted. Its subcellular location is the cell surface. It catalyses the reaction (2R)-2-phosphoglycerate = phosphoenolpyruvate + H2O. It participates in carbohydrate degradation; glycolysis; pyruvate from D-glyceraldehyde 3-phosphate: step 4/5. Its function is as follows. Catalyzes the reversible conversion of 2-phosphoglycerate (2-PG) into phosphoenolpyruvate (PEP). It is essential for the degradation of carbohydrates via glycolysis. The polypeptide is Enolase (Acinetobacter baumannii (strain AYE)).